Consider the following 129-residue polypeptide: Small ribosomal subunit protein uS11 (129 aa).

It belongs to the universal ribosomal protein uS11 family. As to quaternary structure, part of the 30S ribosomal subunit. Interacts with proteins S7 and S18. Binds to IF-3.

In terms of biological role, located on the platform of the 30S subunit, it bridges several disparate RNA helices of the 16S rRNA. Forms part of the Shine-Dalgarno cleft in the 70S ribosome. This Photobacterium profundum (strain SS9) protein is Small ribosomal subunit protein uS11.